The primary structure comprises 337 residues: Putative 4-hydroxythreonine-4-phosphate dehydrogenase (337 aa).

His172, His216, and His271 together coordinate a divalent metal cation.

This sequence belongs to the PdxA family. As to quaternary structure, homodimer. Zn(2+) is required as a cofactor. Mg(2+) serves as cofactor. It depends on Co(2+) as a cofactor.

It is found in the cytoplasm. It catalyses the reaction 4-(phosphooxy)-L-threonine + NAD(+) = 3-amino-2-oxopropyl phosphate + CO2 + NADH. Its pathway is cofactor biosynthesis; pyridoxine 5'-phosphate biosynthesis; pyridoxine 5'-phosphate from D-erythrose 4-phosphate: step 4/5. In terms of biological role, catalyzes the NAD(P)-dependent oxidation of 4-(phosphooxy)-L-threonine (HTP) into 2-amino-3-oxo-4-(phosphooxy)butyric acid which spontaneously decarboxylates to form 3-amino-2-oxopropyl phosphate (AHAP). This is Putative 4-hydroxythreonine-4-phosphate dehydrogenase from Pasteurella multocida (strain Pm70).